The sequence spans 602 residues: Elongation factor 4 (602 aa).

One can recognise a tr-type G domain in the interval N7–Q189. GTP-binding positions include D19–T24 and N136–D139.

The protein belongs to the TRAFAC class translation factor GTPase superfamily. Classic translation factor GTPase family. LepA subfamily.

It is found in the cell inner membrane. The enzyme catalyses GTP + H2O = GDP + phosphate + H(+). Functionally, required for accurate and efficient protein synthesis under certain stress conditions. May act as a fidelity factor of the translation reaction, by catalyzing a one-codon backward translocation of tRNAs on improperly translocated ribosomes. Back-translocation proceeds from a post-translocation (POST) complex to a pre-translocation (PRE) complex, thus giving elongation factor G a second chance to translocate the tRNAs correctly. Binds to ribosomes in a GTP-dependent manner. This chain is Elongation factor 4, found in Protochlamydia amoebophila (strain UWE25).